Here is a 446-residue protein sequence, read N- to C-terminus: Coiled-coil domain-containing protein 112 (446 aa).

2 coiled-coil regions span residues 35 to 116 (KTER…RKID) and 219 to 400 (ERKK…NVSR). Disordered regions lie at residues 253–272 (FHNK…KKQK) and 390–430 (LKEK…LLHI). Positions 255-268 (NKQEDNQKQKEEQR) are enriched in basic and acidic residues.

The protein resides in the cytoplasm. It localises to the cytoskeleton. The protein localises to the microtubule organizing center. Its subcellular location is the centrosome. It is found in the centriolar satellite. The chain is Coiled-coil domain-containing protein 112 (CCDC112) from Homo sapiens (Human).